Consider the following 149-residue polypeptide: Internal scaffolding protein ORF3 (149 aa).

The protein belongs to the microvidae B protein family.

It is found in the host cytoplasm. In terms of biological role, participates in the assembly of the viral procapsid in the cytoplasm. Released from the procapsid upon genome packaging, possibly through affinity displacement by the protein ORF8, or by proteolysis. In Spiroplasma virus 4 (SpV4), this protein is Internal scaffolding protein ORF3.